A 98-amino-acid chain; its full sequence is MSLVYVNIMIAFSVSFLGLLMFRSHLMSSLLCLEGMMLSLFILGTILILNFHFTLASMAPIIMLVFAACEAAVGLSLLVMVSNTYGVDYVQNLNLLQC.

A run of 3 helical transmembrane segments spans residues 2-22, 29-49, and 61-81; these read SLVY…LLMF, SLLC…ILIL, and IIML…LVMV.

Belongs to the complex I subunit 4L family. As to quaternary structure, core subunit of respiratory chain NADH dehydrogenase (Complex I) which is composed of 45 different subunits.

It localises to the mitochondrion inner membrane. The catalysed reaction is a ubiquinone + NADH + 5 H(+)(in) = a ubiquinol + NAD(+) + 4 H(+)(out). Core subunit of the mitochondrial membrane respiratory chain NADH dehydrogenase (Complex I) which catalyzes electron transfer from NADH through the respiratory chain, using ubiquinone as an electron acceptor. Part of the enzyme membrane arm which is embedded in the lipid bilayer and involved in proton translocation. The chain is NADH-ubiquinone oxidoreductase chain 4L (MT-ND4L) from Galemys pyrenaicus (Iberian desman).